The sequence spans 519 residues: Aspartokinase (519 aa).

Ser-326 bears the Phosphoserine mark. Residue Thr-328 is modified to Phosphothreonine. In terms of domain architecture, ACT spans 436–518; that stretch reads LVGKHMRNTT…MLVEKPWLYS (83 aa).

This sequence belongs to the aspartokinase family.

The catalysed reaction is L-aspartate + ATP = 4-phospho-L-aspartate + ADP. The protein operates within amino-acid biosynthesis; L-methionine biosynthesis via de novo pathway; L-homoserine from L-aspartate: step 1/3. It participates in amino-acid biosynthesis; L-threonine biosynthesis; L-threonine from L-aspartate: step 1/5. Functionally, phosphorylates aspartate, the first step in the biosynthesis of amino acids that derive from aspartate (the aspartate family of amino acids), including methioinine and threonine, the latter of which is a precursor to isoleucine. The sequence is that of Aspartokinase from Schizosaccharomyces pombe (strain 972 / ATCC 24843) (Fission yeast).